Here is a 229-residue protein sequence, read N- to C-terminus: ATP-dependent dethiobiotin synthetase BioD (229 aa).

15–20 (EIGKTL) is a binding site for ATP. Position 19 (threonine 19) interacts with Mg(2+). The active site involves lysine 40. ATP contacts are provided by residues aspartate 57, 118-121 (EGVG), and 207-209 (PRL). Mg(2+)-binding residues include aspartate 57 and glutamate 118.

Belongs to the dethiobiotin synthetase family. Homodimer. It depends on Mg(2+) as a cofactor.

Its subcellular location is the cytoplasm. It catalyses the reaction (7R,8S)-7,8-diammoniononanoate + CO2 + ATP = (4R,5S)-dethiobiotin + ADP + phosphate + 3 H(+). Its pathway is cofactor biosynthesis; biotin biosynthesis; biotin from 7,8-diaminononanoate: step 1/2. Its function is as follows. Catalyzes a mechanistically unusual reaction, the ATP-dependent insertion of CO2 between the N7 and N8 nitrogen atoms of 7,8-diaminopelargonic acid (DAPA, also called 7,8-diammoniononanoate) to form a ureido ring. The sequence is that of ATP-dependent dethiobiotin synthetase BioD from Ralstonia nicotianae (strain ATCC BAA-1114 / GMI1000) (Ralstonia solanacearum).